We begin with the raw amino-acid sequence, 187 residues long: Elongation factor P (187 aa).

The protein belongs to the elongation factor P family.

The protein resides in the cytoplasm. It functions in the pathway protein biosynthesis; polypeptide chain elongation. Functionally, involved in peptide bond synthesis. Stimulates efficient translation and peptide-bond synthesis on native or reconstituted 70S ribosomes in vitro. Probably functions indirectly by altering the affinity of the ribosome for aminoacyl-tRNA, thus increasing their reactivity as acceptors for peptidyl transferase. This is Elongation factor P from Mycobacterium avium (strain 104).